The following is a 360-amino-acid chain: Peptide chain release factor 1 (360 aa).

Position 235 is an N5-methylglutamine (Gln-235). The tract at residues 284-313 (AKRQQAEASTRRNLLGSGDRSDRNRTYNFP) is disordered.

The protein belongs to the prokaryotic/mitochondrial release factor family. Methylated by PrmC. Methylation increases the termination efficiency of RF1.

The protein resides in the cytoplasm. Its function is as follows. Peptide chain release factor 1 directs the termination of translation in response to the peptide chain termination codons UAG and UAA. In Salmonella schwarzengrund (strain CVM19633), this protein is Peptide chain release factor 1.